Here is a 100-residue protein sequence, read N- to C-terminus: Small ribosomal subunit protein uS14c (100 aa).

Belongs to the universal ribosomal protein uS14 family. Part of the 30S ribosomal subunit.

It is found in the plastid. The protein resides in the chloroplast. Functionally, binds 16S rRNA, required for the assembly of 30S particles. The sequence is that of Small ribosomal subunit protein uS14c from Gossypium barbadense (Sea Island cotton).